The chain runs to 125 residues: Small ribosomal subunit protein uS12m (125 aa).

Disordered regions lie at residues methionine 1–alanine 23 and leucine 104–isoleucine 125. The segment covering histidine 10 to alanine 23 has biased composition (basic and acidic residues).

The protein belongs to the universal ribosomal protein uS12 family.

The protein resides in the mitochondrion. Protein S12 is involved in the translation initiation step. The chain is Small ribosomal subunit protein uS12m (RPS12) from Raphanus sativus (Radish).